Consider the following 431-residue polypeptide: uncharacterized protein (431 aa).

This is an uncharacterized protein from Acanthamoeba polyphaga (Amoeba).